Reading from the N-terminus, the 134-residue chain is Small ribosomal subunit protein bS6 (134 aa).

It belongs to the bacterial ribosomal protein bS6 family.

In terms of biological role, binds together with bS18 to 16S ribosomal RNA. In Chlorobium phaeobacteroides (strain BS1), this protein is Small ribosomal subunit protein bS6.